The primary structure comprises 118 residues: Transcription factor PAR1 (118 aa).

A disordered region spans residues 1-58 (MEETLATPDATRRSLSPSCSATVKSRAAGFERRTKRRLSETNASVREDREEAEEEEDE). A compositionally biased stretch (polar residues) spans 13–23 (RSLSPSCSATV). Positions 43 to 92 (ASVREDREEAEEEEDEVKEKIEALQRIIPGGAALGVDALFEETAGYILSL) constitute a bHLH domain.

Belongs to the bHLH protein family. In terms of assembly, homodimer.

The protein resides in the nucleus. Functionally, atypical bHLH transcription factor that acts as a negative regulator of a variety of shade avoidance syndrome (SAS) responses, including seedling elongation and photosynthetic pigment accumulation. Acts as a direct transcriptional repressor of two auxin-responsive genes, SAUR15 and SAUR68. May function in integrating shade and hormone transcriptional networks in response to light and auxin changes. This Arabidopsis thaliana (Mouse-ear cress) protein is Transcription factor PAR1 (PAR1).